A 179-amino-acid chain; its full sequence is Orotate phosphoribosyltransferase (179 aa).

5-phospho-alpha-D-ribose 1-diphosphate is bound by residues arginine 94, lysine 95, lysine 98, histidine 100, and 120–128 (EDTSTTGNS). Positions 124 and 152 each coordinate orotate.

Belongs to the purine/pyrimidine phosphoribosyltransferase family. PyrE subfamily. As to quaternary structure, homodimer. Mg(2+) serves as cofactor.

The catalysed reaction is orotidine 5'-phosphate + diphosphate = orotate + 5-phospho-alpha-D-ribose 1-diphosphate. It functions in the pathway pyrimidine metabolism; UMP biosynthesis via de novo pathway; UMP from orotate: step 1/2. Its function is as follows. Catalyzes the transfer of a ribosyl phosphate group from 5-phosphoribose 1-diphosphate to orotate, leading to the formation of orotidine monophosphate (OMP). The protein is Orotate phosphoribosyltransferase of Mycobacterium bovis (strain ATCC BAA-935 / AF2122/97).